The sequence spans 264 residues: GATA transcription factor 2 (264 aa).

The segment covering 29 to 42 (SSSGGSTAATSSSS) has biased composition (low complexity). 2 disordered regions span residues 29-57 (SSSG…HHLP) and 96-192 (NPLG…TPQW). The span at 101 to 110 (TMTSVKTETS) shows a compositional bias: polar residues. A Nuclear localization signal motif is present at residues 114-121 (KPRSKRSR). Gly residues predominate over residues 155 to 164 (SGGGGGGGGR). The segment at 175–229 (GGGMRRCTHCASEKTPQWRTGPLGPKTLCNACGVRFKSGRLVPEYRPASSPTFVL) adopts a GATA-type zinc-finger fold.

This sequence belongs to the type IV zinc-finger family. Class A subfamily. In terms of tissue distribution, mostly expressed in roots. Also expressed in flowers and leaves, and to a lower extent in stems.

The protein resides in the nucleus. Functionally, transcriptional activator that specifically binds 5'-GATA-3' or 5'-GAT-3' motifs within gene promoters. May be involved in the regulation of some light-responsive genes. This Arabidopsis thaliana (Mouse-ear cress) protein is GATA transcription factor 2 (GATA2).